We begin with the raw amino-acid sequence, 251 residues long: Hydroxyacylglutathione hydrolase (251 aa).

Residues H53, H55, D57, H58, H110, D127, and H165 each coordinate Zn(2+).

It belongs to the metallo-beta-lactamase superfamily. Glyoxalase II family. In terms of assembly, monomer. Zn(2+) serves as cofactor.

It carries out the reaction an S-(2-hydroxyacyl)glutathione + H2O = a 2-hydroxy carboxylate + glutathione + H(+). It participates in secondary metabolite metabolism; methylglyoxal degradation; (R)-lactate from methylglyoxal: step 2/2. Functionally, thiolesterase that catalyzes the hydrolysis of S-D-lactoyl-glutathione to form glutathione and D-lactic acid. The sequence is that of Hydroxyacylglutathione hydrolase from Escherichia coli (strain ATCC 8739 / DSM 1576 / NBRC 3972 / NCIMB 8545 / WDCM 00012 / Crooks).